Here is a 187-residue protein sequence, read N- to C-terminus: Probable DNA-directed RNA polymerase subunit delta (187 aa).

Residues 14 to 81 (LSMIEVAHAL…GNNVWALRSW (68 aa)) enclose the HTH HARE-type domain. The segment at 96–187 (EIEDEEEEKP…EDDSDDTDED (92 aa)) is disordered. Composition is skewed to acidic residues over residues 117–149 (IEDEIDPEDEEGTKETTEEDMSYDTQAEDEDKD) and 157–187 (ELAEVELDNVDEEVDIELEDDEDDSDDTDED).

This sequence belongs to the RpoE family. As to quaternary structure, RNAP is composed of a core of 2 alpha, a beta and a beta' subunits. The core is associated with a delta subunit and one of several sigma factors.

Participates in both the initiation and recycling phases of transcription. In the presence of the delta subunit, RNAP displays an increased specificity of transcription, a decreased affinity for nucleic acids, and an increased efficiency of RNA synthesis because of enhanced recycling. The chain is Probable DNA-directed RNA polymerase subunit delta from Lactococcus lactis subsp. cremoris (strain SK11).